The sequence spans 535 residues: Methylmalonate-semialdehyde/malonate-semialdehyde dehydrogenase [acylating], mitochondrial (535 aa).

A mitochondrion-targeting transit peptide spans 1–33 (MAALLAAAAVRARILQVSSKVKSSPTWYSASSF). N6-acetyllysine; alternate is present on residues Lys47, Lys52, Lys55, and Lys76. Lys47, Lys52, Lys55, and Lys76 each carry N6-succinyllysine; alternate. Lys87 bears the N6-acetyllysine mark. An N6-acetyllysine; alternate mark is found at Lys117 and Lys129. 2 positions are modified to N6-succinyllysine; alternate: Lys117 and Lys129. Residues Ala183, Phe185, Lys209, Glu212, Arg213, and Ser262 each contribute to the NAD(+) site. Ser262 carries the post-translational modification Phosphoserine. An N6-acetyllysine modification is found at Lys298. The Nucleophile role is filled by Cys317. 2 positions are modified to N6-acetyllysine: Lys330 and Lys331. An N6-acetyllysine; alternate mark is found at Lys364 and Lys376. Residues Lys364 and Lys376 each carry the N6-succinyllysine; alternate modification. Phosphoserine is present on Ser380. Position 391 is an N6-succinyllysine (Lys391). Residue Glu417 coordinates NAD(+). At Lys500 the chain carries N6-acetyllysine. Residue Lys517 is modified to N6-succinyllysine.

It belongs to the aldehyde dehydrogenase family. In terms of assembly, homotetramer.

It localises to the mitochondrion. The enzyme catalyses 3-oxopropanoate + NAD(+) + CoA + H2O = hydrogencarbonate + acetyl-CoA + NADH + H(+). It carries out the reaction 2-methyl-3-oxopropanoate + NAD(+) + CoA + H2O = propanoyl-CoA + hydrogencarbonate + NADH + H(+). The catalysed reaction is (R)-2-methyl-3-oxopropanoate + NAD(+) + CoA + H2O = propanoyl-CoA + hydrogencarbonate + NADH + H(+). It catalyses the reaction (S)-2-methyl-3-oxopropanoate + NAD(+) + CoA + H2O = propanoyl-CoA + hydrogencarbonate + NADH + H(+). Functionally, malonate and methylmalonate semialdehyde dehydrogenase involved in the catabolism of valine, thymine, and compounds catabolized by way of beta-alanine, including uracil and cytidine. This is Methylmalonate-semialdehyde/malonate-semialdehyde dehydrogenase [acylating], mitochondrial from Homo sapiens (Human).